We begin with the raw amino-acid sequence, 64 residues long: uncharacterized protein (64 aa).

The chain crosses the membrane as a helical span at residues 30–52 (FYAIFEMLFWPLVSLISVGLLGE).

It is found in the membrane. This is an uncharacterized protein from Archaeoglobus fulgidus (strain ATCC 49558 / DSM 4304 / JCM 9628 / NBRC 100126 / VC-16).